A 213-amino-acid polypeptide reads, in one-letter code: Large ribosomal subunit protein uL1 (213 aa).

Belongs to the universal ribosomal protein uL1 family. Part of the 50S ribosomal subunit.

Binds directly to 23S rRNA. Probably involved in E site tRNA release. Functionally, protein L1 is also a translational repressor protein, it controls the translation of its operon by binding to its mRNA. This Methanococcus maripaludis (strain C5 / ATCC BAA-1333) protein is Large ribosomal subunit protein uL1.